We begin with the raw amino-acid sequence, 155 residues long: Small ribosomal subunit protein uS7cz/uS7cy (155 aa).

Belongs to the universal ribosomal protein uS7 family. As to quaternary structure, part of the 30S ribosomal subunit.

Its subcellular location is the plastid. The protein localises to the chloroplast. In terms of biological role, one of the primary rRNA binding proteins, it binds directly to 16S rRNA where it nucleates assembly of the head domain of the 30S subunit. The protein is Small ribosomal subunit protein uS7cz/uS7cy (rps7-A) of Guizotia abyssinica (Niger).